The sequence spans 357 residues: MEGSSSAIARKTWELENNILPVEPTDSASDSIFHYDDASQAKIQQEKPWASDPNYFKRVHISALALLKMVVHARSGGTIEIMGLMQGKTEGDTIIVMDAFALPVEGTETRVNAQSDAYEYMVEYSQTSKLAGRLENVVGWYHSHPGYGCWLSGIDVSTQMLNQQYQEPFLAVVIDPTRTVSAGKVEIGAFRTYPEGHKISDDHVSEYQTIPLNKIEDFGVHCKQYYSLDITYFKSSLDSHLLDLLWNKYWVNTLSSSPLLGNGDYVAGQISDLAEKLEQAESQLANSRYGGIAPAGHQRRKEDEPQLAKITRDSAKITVEQVHGLMSQVIKDILFNSARQSKKSADDSSDPEPMITS.

The residue at position 1 (Met1) is an N-acetylmethionine. In terms of domain architecture, MPN spans 59 to 196 (VHISALALLK…IGAFRTYPEG (138 aa)). Positions 142, 144, and 155 each coordinate Zn(2+). The short motif at 142–155 (HSHPGYGCWLSGID) is the JAMM motif element. Positions 338 to 357 (ARQSKKSADDSSDPEPMITS) are disordered.

It belongs to the peptidase M67A family. CSN5 subfamily. Component of the CSN complex, probably composed of CSN1, CSN2, CSN3, CSN4, CSN5 (CSN5A or CSN5B), CSN6 (CSN6A or CSN6B), CSN7 and CSN8. CSN5A or CSN5B are present within distinct CSN complexes each containing only one copy of CSN5. Interacts with itself. In the complex, it is located in the center and probably interacts directly with CSN4 and CSN6A or CSN6B. Present also in subcomplex forms which inculdes CSN3. Also exists as monomeric form. Interacts with CYT1 in vitro, but not in planta. The cofactor is a divalent metal cation. As to expression, ubiquitously expressed. Highly expressed in flowers and roots. Expressed at lower level in seedlings and siliques.

The protein localises to the cytoplasm. The protein resides in the nucleus. Functionally, probable protease subunit of the COP9 signalosome complex (CSN), a complex involved in various cellular and developmental processes such as photomorphogenesis and auxin and jasmonate responses. The CSN complex is an essential regulator of the ubiquitin (Ubl) conjugation pathway by mediating the deneddylation of the cullin subunits of the SCF-type E3 ligase complexes, leading to decrease the Ubl ligase activity of SCF. In the complex, it probably acts as the catalytic center that mediates the cleavage of Nedd8 from cullins. It however has no metalloprotease activity by itself and requires the other subunits of the CSN complex. The CSN complex is involved in repression of photomorphogenesis in darkness by regulating the activity of COP1-containing Ubl ligase complexes. The complex is also required for degradation of PSIAA6 by regulating the activity of the Ubl ligase SCF-TIR complex. Involved in CSN's deneddylation/derubylation activity. Required for the deneddylation of all cullins. Essential for the structural integrity of the CSN holocomplex. The sequence is that of COP9 signalosome complex subunit 5a from Arabidopsis thaliana (Mouse-ear cress).